Here is a 576-residue protein sequence, read N- to C-terminus: Proline--tRNA ligase (576 aa).

This sequence belongs to the class-II aminoacyl-tRNA synthetase family. ProS type 1 subfamily. Homodimer.

It localises to the cytoplasm. It catalyses the reaction tRNA(Pro) + L-proline + ATP = L-prolyl-tRNA(Pro) + AMP + diphosphate. Catalyzes the attachment of proline to tRNA(Pro) in a two-step reaction: proline is first activated by ATP to form Pro-AMP and then transferred to the acceptor end of tRNA(Pro). As ProRS can inadvertently accommodate and process non-cognate amino acids such as alanine and cysteine, to avoid such errors it has two additional distinct editing activities against alanine. One activity is designated as 'pretransfer' editing and involves the tRNA(Pro)-independent hydrolysis of activated Ala-AMP. The other activity is designated 'posttransfer' editing and involves deacylation of mischarged Ala-tRNA(Pro). The misacylated Cys-tRNA(Pro) is not edited by ProRS. The sequence is that of Proline--tRNA ligase from Dechloromonas aromatica (strain RCB).